The primary structure comprises 563 residues: Merozoite receptor PK66 (563 aa).

The N-terminal stretch at 1–13 (MNKIYYILFLSAQ) is a signal peptide. Residues 14 to 487 (CLVHMGKCER…DGKHKKKMLL (474 aa)) are Extracellular-facing. N-linked (GlcNAc...) asparagine glycosylation is found at asparagine 36, asparagine 107, asparagine 176, asparagine 189, asparagine 238, and asparagine 441. Residues 488–508 (IIIGVTGAVCVVAVASLFYFR) form a helical membrane-spanning segment. The Cytoplasmic portion of the chain corresponds to 509–563 (KKAQDDKYDKMDQAEAYGKTANTRKDEMLDPEASFWGEDKRASHTTPVLMEKPYY).

Belongs to the apicomplexan parasites AMA1 family.

The protein localises to the membrane. Its function is as follows. Merozoite receptor PK66 is a surface antigen involved in parasite invasion of erythrocytes. The chain is Merozoite receptor PK66 (PK66) from Plasmodium knowlesi (strain nuri).